Reading from the N-terminus, the 188-residue chain is MGFYALLLIALGMSMDAFAVALAKGAAVRMPPRKIAATALVFGSVEALTPLAGWVGGFYAKPFISEWDHWAAFVLLGGLGLKMMREGLSGKAEDVRESKRESLWMTVLTAFGTSIDSMIVGVGLAFMEVNIAFAAAIIGMATTVMVAVGLAAGGALGGLFGKRAEFAGGLVLIAIGTWTLLSHLGLIG.

6 helical membrane passes run 3 to 23 (FYALLLIALGMSMDAFAVALA), 35 to 55 (IAATALVFGSVEALTPLAGWV), 63 to 83 (FISEWDHWAAFVLLGGLGLKM), 107 to 127 (VLTAFGTSIDSMIVGVGLAFM), 131 to 151 (IAFAAAIIGMATTVMVAVGLA), and 167 to 187 (AGGLVLIAIGTWTLLSHLGLI).

Belongs to the MntP (TC 9.B.29) family.

The protein resides in the cell inner membrane. In terms of biological role, probably functions as a manganese efflux pump. The chain is Putative manganese efflux pump MntP from Neisseria meningitidis serogroup A / serotype 4A (strain DSM 15465 / Z2491).